Consider the following 599-residue polypeptide: Beta-glucuronidase (599 aa).

Residues D160 and N407 each contribute to the D-glucuronate site. E408 serves as the catalytic Proton donor. Residues N462, Y468, E501, W546, and K565 each coordinate D-glucuronate. E501 acts as the Nucleophile in catalysis. An N-K motif motif is present at residues 563–565 (NHK).

This sequence belongs to the glycosyl hydrolase 2 family.

It catalyses the reaction a beta-D-glucuronoside + H2O = D-glucuronate + an alcohol. With respect to regulation, inhibited by a set of synthetic compounds like thio-urea derivatives and analogs. Inhibitors of gut microbial beta-glucuronidases are expected to block the reactivation of glucuronidated cancer drugs, and to alleviate drug-induced GI toxicity. Displays beta-glucuronidase activity with the artificial substrate p-nitrophenyl-beta-D-glucuronide (PNPG). Is likely capable of scavenging glucuronate from a range of chemically distinct xenobiotic and endobiotic glucuronides present in the gastrointestinal (GI) tract, to be able to utilize these diverse sources of carbon. As part of the GI microbiome, this enzyme would be able to reactivate glucuronide drug conjugates, such reactivated compounds can significantly damage the GI tract. The chain is Beta-glucuronidase from Streptococcus agalactiae serotype V (strain ATCC BAA-611 / 2603 V/R).